The primary structure comprises 346 residues: Methylthioribose-1-phosphate isomerase (346 aa).

Residues 46-48 (RGA), Arg89, and Gln196 each bind substrate. Asp237 (proton donor) is an active-site residue. Residue 247–248 (NK) coordinates substrate.

This sequence belongs to the eIF-2B alpha/beta/delta subunits family. MtnA subfamily.

It carries out the reaction 5-(methylsulfanyl)-alpha-D-ribose 1-phosphate = 5-(methylsulfanyl)-D-ribulose 1-phosphate. It participates in amino-acid biosynthesis; L-methionine biosynthesis via salvage pathway; L-methionine from S-methyl-5-thio-alpha-D-ribose 1-phosphate: step 1/6. Catalyzes the interconversion of methylthioribose-1-phosphate (MTR-1-P) into methylthioribulose-1-phosphate (MTRu-1-P). The sequence is that of Methylthioribose-1-phosphate isomerase from Geobacter sulfurreducens (strain ATCC 51573 / DSM 12127 / PCA).